The primary structure comprises 382 residues: Neuropeptide Y receptor type 1 (382 aa).

The Extracellular segment spans residues 1–33 (MNSTLFSRVENYSVHYNVSENSPFLAFENDDCH). N-linked (GlcNAc...) asparagine glycans are attached at residues asparagine 2, asparagine 11, and asparagine 17. Residues 34-54 (LPLAVIFTLALAYGAVIILGV) form a helical membrane-spanning segment. Residues 55-75 (SGNLALIIIILKQKEMRNVTN) are Cytoplasmic-facing. The chain crosses the membrane as a helical span at residues 76 to 96 (ILIVNLSFSDLLVAVMCLPFT). The Extracellular segment spans residues 97–115 (FVYTLMDHWVFGETMCKLN). Cysteine 112 and cysteine 197 are disulfide-bonded. A helical membrane pass occupies residues 116 to 136 (PFVQCVSITVSIFSLVLIAVE). Topologically, residues 137–153 (RHQLIINPRGWRPNNRH) are cytoplasmic. A helical membrane pass occupies residues 154–174 (AYIGITVIWVLAVASSLPFVI). Over 175–210 (YQILTDEPFQNVSLAAFKDKYVCFDKFPSDSHRLSY) the chain is Extracellular. A helical transmembrane segment spans residues 211-231 (TTLLLVLQYFGPLCFIFICYF). Residues 232–259 (KIYIRLKRRNNMMDKIRDSKYRSSETKR) lie on the Cytoplasmic side of the membrane. A helical membrane pass occupies residues 260–280 (INVMLLSIVVAFAVCWLPLTI). The Extracellular portion of the chain corresponds to 281-298 (FNTVFDWNHQIIATCNHN). Residues 299-319 (LLFLLCHLTAMISTCVNPIFY) form a helical membrane-spanning segment. Over 320–382 (GFLNKNFQRD…KISMNDNEKI (63 aa)) the chain is Cytoplasmic. The S-palmitoyl cysteine moiety is linked to residue cysteine 337. Residues serine 367 and serine 375 each carry the phosphoserine modification.

The protein belongs to the G-protein coupled receptor 1 family. As to expression, brain.

Its subcellular location is the cell membrane. Its function is as follows. Receptor for neuropeptide Y and peptide YY. The polypeptide is Neuropeptide Y receptor type 1 (Npy1r) (Rattus norvegicus (Rat)).